The sequence spans 112 residues: 2Fe-2S ferredoxin (112 aa).

The 103-residue stretch at 5 to 107 (IKVTFIINDG…GIKVRLPSAT (103 aa)) folds into the 2Fe-2S ferredoxin-type domain. [2Fe-2S] cluster contacts are provided by Cys42, Cys48, Cys51, and Cys88.

The protein belongs to the adrenodoxin/putidaredoxin family. It depends on [2Fe-2S] cluster as a cofactor.

Functionally, ferredoxin are iron-sulfur proteins that transfer electrons in a wide variety of metabolic reactions. In Rickettsia montanensis, this protein is 2Fe-2S ferredoxin (fdxB).